A 213-amino-acid polypeptide reads, in one-letter code: uncharacterized protein (213 aa).

Residues Gly-53, Glu-74, and Asp-96 each coordinate S-adenosyl-L-methionine.

Belongs to the methyltransferase superfamily. YrrT family.

Its function is as follows. Could be a S-adenosyl-L-methionine-dependent methyltransferase. This is an uncharacterized protein from Bacillus pumilus (strain SAFR-032).